The sequence spans 205 residues: RPW8-like protein 2 (205 aa).

Residues Met-1–Ile-153 form the RPW8 domain. Residues Ile-7–Ile-23 form a helical membrane-spanning segment. Coiled coils occupy residues Glu-70–Arg-92 and Ala-125–Gln-147.

Belongs to the plant RPW8 protein family.

It is found in the membrane. Probable disease resistance (R) protein. This Arabidopsis thaliana (Mouse-ear cress) protein is RPW8-like protein 2.